The following is a 364-amino-acid chain: tRNA-specific 2-thiouridylase MnmA (364 aa).

ATP contacts are provided by residues 13-20 and M39; that span reads GMSGGVDS. The interval 99–101 is interaction with target base in tRNA; that stretch reads NPD. C104 (nucleophile) is an active-site residue. Residues C104 and C200 are joined by a disulfide bond. An ATP-binding site is contributed by G128. The segment at 150–152 is interaction with tRNA; sequence KDQ. Catalysis depends on C200, which acts as the Cysteine persulfide intermediate. Positions 310–311 are interaction with tRNA; sequence RY.

Belongs to the MnmA/TRMU family.

It localises to the cytoplasm. The enzyme catalyses S-sulfanyl-L-cysteinyl-[protein] + uridine(34) in tRNA + AH2 + ATP = 2-thiouridine(34) in tRNA + L-cysteinyl-[protein] + A + AMP + diphosphate + H(+). Its function is as follows. Catalyzes the 2-thiolation of uridine at the wobble position (U34) of tRNA, leading to the formation of s(2)U34. In Alkaliphilus oremlandii (strain OhILAs) (Clostridium oremlandii (strain OhILAs)), this protein is tRNA-specific 2-thiouridylase MnmA.